The chain runs to 575 residues: Cyclic nucleotide-gated channel alpha-4 (575 aa).

The Cytoplasmic segment spans residues 1-38 (MSQDGKVKTTESTPPAPTKARKWLPVLDPSGDYYYWWL). A helical transmembrane segment spans residues 39–60 (NTMVFPIMYNLIIVVCRACFPD). Residues 61 to 70 (LQHSYLVAWF) lie on the Extracellular side of the membrane. Residues 71 to 91 (VLDYTSDLLYLLDIGVRFHTG) form a helical membrane-spanning segment. Over 92 to 116 (FLEQGILVVDKGMIASRYVRTWSFL) the chain is Cytoplasmic. The helical transmembrane segment at 117–135 (LDLASLVPTDAAYVQLGPH) threads the bilayer. At 136-140 (IPTLR) the chain is on the extracellular side. The chain crosses the membrane as a helical span at residues 141–159 (LNRFLRVPRLFEAFDRTET). Residues 160-166 (RTAYPNA) lie on the Cytoplasmic side of the membrane. The segment at 164–272 (PNAFRIAKLM…GSMSSVIYNM (109 aa)) is ion conduction pathway. The chain crosses the membrane as a helical span at residues 167–190 (FRIAKLMLYIFVVIHWNSCLYFAL). The Extracellular portion of the chain corresponds to 191–213 (SRYLGFGRDAWVYPDPAQPGFER). 2 helical membrane passes run 214–248 (LRRQ…LFMV) and 249–273 (GDFL…YNMN). Residues 231-234 (TVGD) form a selectivity filter region. The C-linker stretch occupies residues 274–350 (TADAAFYPDH…STLSRVQIFQ (77 aa)). At 274 to 575 (TADAAFYPDH…AGQAGPSGIE (302 aa)) the chain is on the cytoplasmic side. An IQ-type motif is present at residues 292–302 (LQHVNKRLERR). 348-471 (IFQNCEASLL…AVMEEKGREI (124 aa)) lines the a nucleoside 3',5'-cyclic phosphate pocket. The cyclic nucleotide-binding domain stretch occupies residues 354–474 (ASLLEELVLK…EEKGREILLK (121 aa)). The 3',5'-cyclic GMP site is built by Gly-414, Ser-417, Arg-430, and Thr-431. 2 residues coordinate 3',5'-cyclic AMP: Arg-430 and Thr-431. Residues 493–547 (TESRLKGLDQQLDDLQTKFARLLAELESSALKIAYRIERLEWQTREWPMPEDMGE) are a coiled coil. The interval 537-575 (REWPMPEDMGEADDEAEPGEGTSKDGEGKAGQAGPSGIE) is disordered. The span at 544–554 (DMGEADDEAEP) shows a compositional bias: acidic residues.

It belongs to the cyclic nucleotide-gated cation channel (TC 1.A.1.5) family. CNGA4 subfamily. As to quaternary structure, the olfactory cyclic nucleotide-gated channel is an heterotetramer composed of CNGA2, CNGA4 and CNGB1b subunits with 2:1:1 stoichiometry. May form homomeric channels gated by nitric oxide. Post-translationally, N-glycosylated. Olfactory neurons. Expressed in olfactory sensory cilia (at protein level).

The protein localises to the cell projection. It is found in the cilium membrane. It catalyses the reaction Ca(2+)(in) = Ca(2+)(out). The enzyme catalyses Na(+)(in) = Na(+)(out). It carries out the reaction K(+)(in) = K(+)(out). The catalysed reaction is NH4(+)(in) = NH4(+)(out). It catalyses the reaction Rb(+)(in) = Rb(+)(out). The enzyme catalyses Li(+)(in) = Li(+)(out). It carries out the reaction Cs(+)(in) = Cs(+)(out). Its activity is regulated as follows. Ca(2+)-calmodulin exerts its inhibitory effect in cAMP sensitivity by binding to IQ-like motif of CNGA4 and preferably binds to the channel in the closed state. Inhibition by PIP3 of the CNG channel probably occurs via CGNA2 binding. Ca(2+) currents are inhibited by pimozide, an L-type Ca(2+) channel blocker. Its function is as follows. Pore-forming subunit of the olfactory cyclic nucleotide-gated channel. Operates in the cilia of olfactory sensory neurons where chemical stimulation of the odorant is converted to an electrical signal. Mediates odorant-induced cAMP-dependent Ca(2+) influx triggering neuron depolarization. The rise of intracellular Ca(2+) levels potentiates the olfactory response by activating Ca(2+)-dependent Cl(-) channels, but it also serves as a negative feedback signal to desensitize the channel for rapid adaptation to odorants. Conducts cAMP- and cGMP-gated ion currents, with permeability for monovalent and divalent cations. May conduct nitric oxide-gated Ca(2+) currents relevant to neurons of vomeronasal organ, a system involved in the perception of pheromones. The polypeptide is Cyclic nucleotide-gated channel alpha-4 (Rattus norvegicus (Rat)).